The following is a 612-amino-acid chain: Methionine--tRNA ligase (612 aa).

A 'HIGH' region motif is present at residues 12–22; the sequence is PYANGPRHIGH. Positions 144, 147, 157, and 160 each coordinate Zn(2+). The short motif at 348–352 is the 'KMSKS' region element; the sequence is KFSSS. Position 351 (Ser-351) interacts with ATP.

This sequence belongs to the class-I aminoacyl-tRNA synthetase family. MetG type 1 subfamily. In terms of assembly, monomer. Zn(2+) serves as cofactor.

It localises to the cytoplasm. The catalysed reaction is tRNA(Met) + L-methionine + ATP = L-methionyl-tRNA(Met) + AMP + diphosphate. In terms of biological role, is required not only for elongation of protein synthesis but also for the initiation of all mRNA translation through initiator tRNA(fMet) aminoacylation. The chain is Methionine--tRNA ligase from Corynebacterium kroppenstedtii (strain DSM 44385 / JCM 11950 / CIP 105744 / CCUG 35717).